The chain runs to 214 residues: Probable transaldolase (214 aa).

Lys83 (schiff-base intermediate with substrate) is an active-site residue.

The protein belongs to the transaldolase family. Type 3B subfamily.

It localises to the cytoplasm. It carries out the reaction D-sedoheptulose 7-phosphate + D-glyceraldehyde 3-phosphate = D-erythrose 4-phosphate + beta-D-fructose 6-phosphate. It participates in carbohydrate degradation; pentose phosphate pathway; D-glyceraldehyde 3-phosphate and beta-D-fructose 6-phosphate from D-ribose 5-phosphate and D-xylulose 5-phosphate (non-oxidative stage): step 2/3. In terms of biological role, transaldolase is important for the balance of metabolites in the pentose-phosphate pathway. The sequence is that of Probable transaldolase from Geotalea uraniireducens (strain Rf4) (Geobacter uraniireducens).